We begin with the raw amino-acid sequence, 383 residues long: Sterol 24-C-methyltransferase ERG6 (383 aa).

Ser-2 is modified (N-acetylserine). At Ser-99 the chain carries Phosphoserine.

This sequence belongs to the class I-like SAM-binding methyltransferase superfamily. Erg6/SMT family. In terms of assembly, interacts with ERG28.

Its subcellular location is the microsome. The protein localises to the mitochondrion. It catalyses the reaction zymosterol + S-adenosyl-L-methionine = fecosterol + S-adenosyl-L-homocysteine + H(+). It participates in steroid metabolism; ergosterol biosynthesis; ergosterol from zymosterol: step 1/5. Functionally, sterol 24-C-methyltransferase; part of the third module of ergosterol biosynthesis pathway that includes the late steps of the pathway. ERG6 catalyzes the methyl transfer from S-adenosyl-methionine to the C-24 of zymosterol to form fecosterol. The third module or late pathway involves the ergosterol synthesis itself through consecutive reactions that mainly occur in the endoplasmic reticulum (ER) membrane. Firstly, the squalene synthase ERG9 catalyzes the condensation of 2 farnesyl pyrophosphate moieties to form squalene, which is the precursor of all steroids. Squalene synthase is crucial for balancing the incorporation of farnesyl diphosphate (FPP) into sterol and nonsterol isoprene synthesis. Secondly, the squalene epoxidase ERG1 catalyzes the stereospecific oxidation of squalene to (S)-2,3-epoxysqualene, which is considered to be a rate-limiting enzyme in steroid biosynthesis. Then, the lanosterol synthase ERG7 catalyzes the cyclization of (S)-2,3 oxidosqualene to lanosterol, a reaction that forms the sterol core. In the next steps, lanosterol is transformed to zymosterol through a complex process involving various demethylation, reduction and desaturation reactions. The lanosterol 14-alpha-demethylase ERG11 (also known as CYP51) catalyzes C14-demethylation of lanosterol to produce 4,4'-dimethyl cholesta-8,14,24-triene-3-beta-ol, which is critical for ergosterol biosynthesis. The C-14 reductase ERG24 reduces the C14=C15 double bond of 4,4-dimethyl-cholesta-8,14,24-trienol to produce 4,4-dimethyl-cholesta-8,24-dienol. 4,4-dimethyl-cholesta-8,24-dienol is substrate of the C-4 demethylation complex ERG25-ERG26-ERG27 in which ERG25 catalyzes the three-step monooxygenation required for the demethylation of 4,4-dimethyl and 4alpha-methylsterols, ERG26 catalyzes the oxidative decarboxylation that results in a reduction of the 3-beta-hydroxy group at the C-3 carbon to an oxo group, and ERG27 is responsible for the reduction of the keto group on the C-3. ERG28 has a role as a scaffold to help anchor ERG25, ERG26 and ERG27 to the endoplasmic reticulum and ERG29 regulates the activity of the iron-containing C4-methylsterol oxidase ERG25. Then, the sterol 24-C-methyltransferase ERG6 catalyzes the methyl transfer from S-adenosyl-methionine to the C-24 of zymosterol to form fecosterol. The C-8 sterol isomerase ERG2 catalyzes the reaction which results in unsaturation at C-7 in the B ring of sterols and thus converts fecosterol to episterol. The sterol-C5-desaturase ERG3 then catalyzes the introduction of a C-5 double bond in the B ring to produce 5-dehydroepisterol. The C-22 sterol desaturase ERG5 further converts 5-dehydroepisterol into ergosta-5,7,22,24(28)-tetraen-3beta-ol by forming the C-22(23) double bond in the sterol side chain. Finally, ergosta-5,7,22,24(28)-tetraen-3beta-ol is substrate of the C-24(28) sterol reductase ERG4 to produce ergosterol. This chain is Sterol 24-C-methyltransferase ERG6, found in Saccharomyces cerevisiae (strain ATCC 204508 / S288c) (Baker's yeast).